Reading from the N-terminus, the 103-residue chain is Omega toxin Ap5 (103 aa).

An N-terminal signal peptide occupies residues 1-22 (MNTIQVILFAVVLVLTVTVGQA). Residues 23–57 (DEDSAETSLLRKLEEAEASMFGQYLEESKNSREKR) constitute a propeptide that is removed on maturation. Disulfide bonds link Cys58–Cys73, Cys65–Cys78, and Cys72–Cys93.

This sequence belongs to the neurotoxin 14 (magi-1) family. 08 (Ltx-4) subfamily. Expressed by the venom duct.

The protein resides in the secreted. Shows a weak inhibition on the voltage-gated calcium channel Cav2.1/CACNA1A and some voltage-gated sodium channels (with 1 uM toxin tested: 22.08% inhibition on Cav2.1/CACNA1A, 6.6% on Nav1.1/SCN1A, 4.2% on Nav1.5, and 16% on Nav1.7). Its function is as follows. Shows a weak inhibition on the voltage-gated calcium channel Cav2.1/CACNA1A (28.06% at 1 uM). This is Omega toxin Ap5 from Acanthoscurria paulensis (Brazilian giant black tarantula spider).